Here is a 579-residue protein sequence, read N- to C-terminus: Probable cytochrome c biosynthesis protein (579 aa).

The protein belongs to the CcmF/CycK/Ccl1/NrfE/CcsA family.

The protein resides in the mitochondrion. Its function is as follows. Could be involved in assembly and maturation of cytochromes c. May play a role in guidance of apocytochromes and heme groups for the covalent linkage introduced by the cytochrome-c-heme lyase. In Daucus carota (Wild carrot), this protein is Probable cytochrome c biosynthesis protein.